The chain runs to 360 residues: Biotin synthase 2 (360 aa).

In terms of domain architecture, Radical SAM core spans 53-280 (RRVKLNFLVN…TAEVRLSGGR (228 aa)). [4Fe-4S] cluster contacts are provided by C68, C72, and C75. C112, C145, C205, and R275 together coordinate [2Fe-2S] cluster.

Belongs to the radical SAM superfamily. Biotin synthase family. In terms of assembly, homodimer. [4Fe-4S] cluster serves as cofactor. The cofactor is [2Fe-2S] cluster.

It carries out the reaction (4R,5S)-dethiobiotin + (sulfur carrier)-SH + 2 reduced [2Fe-2S]-[ferredoxin] + 2 S-adenosyl-L-methionine = (sulfur carrier)-H + biotin + 2 5'-deoxyadenosine + 2 L-methionine + 2 oxidized [2Fe-2S]-[ferredoxin]. Its pathway is cofactor biosynthesis; biotin biosynthesis; biotin from 7,8-diaminononanoate: step 2/2. Its function is as follows. Catalyzes the conversion of dethiobiotin (DTB) to biotin by the insertion of a sulfur atom into dethiobiotin via a radical-based mechanism. This chain is Biotin synthase 2, found in Frankia casuarinae (strain DSM 45818 / CECT 9043 / HFP020203 / CcI3).